The following is a 431-amino-acid chain: tRNA(Ile)-lysidine synthase (431 aa).

An ATP-binding site is contributed by 19-24; that stretch reads STGIDS.

It belongs to the tRNA(Ile)-lysidine synthase family.

It localises to the cytoplasm. The catalysed reaction is cytidine(34) in tRNA(Ile2) + L-lysine + ATP = lysidine(34) in tRNA(Ile2) + AMP + diphosphate + H(+). Its function is as follows. Ligates lysine onto the cytidine present at position 34 of the AUA codon-specific tRNA(Ile) that contains the anticodon CAU, in an ATP-dependent manner. Cytidine is converted to lysidine, thus changing the amino acid specificity of the tRNA from methionine to isoleucine. The chain is tRNA(Ile)-lysidine synthase from Staphylococcus aureus (strain COL).